The following is a 249-amino-acid chain: DNA polymerase sliding clamp (249 aa).

Belongs to the PCNA family. In terms of assembly, homotrimer. The subunits circularize to form a toroid; DNA passes through its center. Replication factor C (RFC) is required to load the toroid on the DNA.

In terms of biological role, sliding clamp subunit that acts as a moving platform for DNA processing. Responsible for tethering the catalytic subunit of DNA polymerase and other proteins to DNA during high-speed replication. This chain is DNA polymerase sliding clamp, found in Thermococcus fumicolans.